The following is a 238-amino-acid chain: MAFTFKQFHIDDLNCGMAVSTDAVVLGAWAPLTNAKQILDIGAGSGILGLMAAQRSQANITCIELDNTAAIACQHNIAQSPWASRIRLVQGSIQQLSQAEEYQGYFDHIICNPPYFEHGPQAQLSQRAMARHTDQLSFNELLAAIEQCLSPNGLASLILPIQSLHNFNHLLSQSRLEWVERVDIKSVEGKRANRVLCLLTTQTHRTVEPKVSELTLRDTSGQYSQAMVHLTQDFYLKL.

This sequence belongs to the methyltransferase superfamily. tRNA (adenine-N(6)-)-methyltransferase family.

It is found in the cytoplasm. It catalyses the reaction adenosine(37) in tRNA1(Val) + S-adenosyl-L-methionine = N(6)-methyladenosine(37) in tRNA1(Val) + S-adenosyl-L-homocysteine + H(+). Specifically methylates the adenine in position 37 of tRNA(1)(Val) (anticodon cmo5UAC). The protein is tRNA1(Val) (adenine(37)-N6)-methyltransferase of Shewanella putrefaciens (strain CN-32 / ATCC BAA-453).